A 241-amino-acid chain; its full sequence is MDDQEPVYKRILLKLSGEALAGNQGFGIDPQVISGIAEEIREVIGLGVQVAVVIGGGNIFRGMAAAAGGMDRAGADYMGMLATIMNSLALQDALEQAGVPTRVQTAIEMREVAEPYIRRRAIRHLEKKRVVIFGGGTGNPYFTTDTAASLRAMEIDADVILKATKVDGVYSADPCKDKNAVKFDNLKYLDVLKKGLKVMDATATSLCMDNDLPIVVFQLSRPGNIKKVVLGEAIGTIVKGE.

14-17 contributes to the ATP binding site; the sequence is KLSG. The interval 22-27 is involved in allosteric activation by GTP; that stretch reads GNQGFG. Gly-56 serves as a coordination point for UMP. ATP-binding residues include Gly-57 and Arg-61. UMP is bound by residues Asp-76 and 137–144; that span reads TGNPYFTT. ATP-binding residues include Thr-164, Tyr-170, and Asp-173.

This sequence belongs to the UMP kinase family. As to quaternary structure, homohexamer.

The protein localises to the cytoplasm. It carries out the reaction UMP + ATP = UDP + ADP. Its pathway is pyrimidine metabolism; CTP biosynthesis via de novo pathway; UDP from UMP (UMPK route): step 1/1. With respect to regulation, allosterically activated by GTP. Inhibited by UTP. Its function is as follows. Catalyzes the reversible phosphorylation of UMP to UDP. The protein is Uridylate kinase of Syntrophotalea carbinolica (strain DSM 2380 / NBRC 103641 / GraBd1) (Pelobacter carbinolicus).